A 161-amino-acid polypeptide reads, in one-letter code: Interleukin-17F (161 aa).

The first 28 residues, 1–28, serve as a signal peptide directing secretion; sequence MKGSCETTMVKSLLLLMLGFAIISSGAA. Asparagine 83 carries an N-linked (GlcNAc...) asparagine glycan. Disulfide bonds link cysteine 100–cysteine 150 and cysteine 105–cysteine 152.

The protein belongs to the IL-17 family. As to quaternary structure, homodimer; disulfide-linked. Heterodimer with IL17A (IL17A-IL17F). Forms complexes with IL17RA and IL17RC receptors with 2:1 binding stoichiometry: two receptor chains for one interleukin molecule. IL17F homodimer forms predominantly complexes with IL17RC homodimer, whereas IL17A-IL17F favors complexes with IL17RA-IL17RC. IL17RA and IL17RC chains cannot distinguish between IL17A and IL17F molecules, potentially enabling the formation of topologically distinct complexes.

It is found in the secreted. In terms of biological role, effector cytokine of innate and adaptive immune system involved in antimicrobial host defense and maintenance of tissue integrity. IL17A-IL17F signals via IL17RA-IL17RC heterodimeric receptor complex, triggering homotypic interaction of IL17RA and IL17RC chains with TRAF3IP2 adapter through SEFIR domains. This leads to downstream TRAF6-mediated activation of NF-kappa-B and MAPkinase pathways ultimately resulting in transcriptional activation of cytokines, chemokines, antimicrobial peptides and matrix metalloproteinases, with potential strong immune inflammation. IL17A-IL17F is primarily involved in host defense against extracellular bacteria and fungi by inducing neutrophilic inflammation. As signature effector cytokine of T-helper 17 cells (Th17), primarily induces neutrophil activation and recruitment at infection and inflammatory sites. Stimulates the production of antimicrobial beta-defensins DEFB1, DEFB103A, and DEFB104A by mucosal epithelial cells, limiting the entry of microbes through the epithelial barriers. IL17F homodimer can signal via IL17RC homodimeric receptor complex, triggering downstream activation of TRAF6 and NF-kappa-B signaling pathway. Via IL17RC induces transcriptional activation of IL33, a potent cytokine that stimulates group 2 innate lymphoid cells and adaptive T-helper 2 cells involved in pulmonary allergic response to fungi. Likely via IL17RC, promotes sympathetic innervation of peripheral organs by coordinating the communication between gamma-delta T cells and parenchymal cells. Stimulates sympathetic innervation of thermogenic adipose tissue by driving TGFB1 expression. Regulates the composition of intestinal microbiota and immune tolerance by inducing antimicrobial proteins that specifically control the growth of commensal Firmicutes and Bacteroidetes. This chain is Interleukin-17F (Il17f), found in Rattus norvegicus (Rat).